The following is a 343-amino-acid chain: Adenosine kinase (343 aa).

Residue aspartate 296 is part of the active site.

Belongs to the carbohydrate kinase PfkB family. Mg(2+) serves as cofactor.

It carries out the reaction adenosine + ATP = AMP + ADP + H(+). Its pathway is purine metabolism; AMP biosynthesis via salvage pathway; AMP from adenosine: step 1/1. Its function is as follows. ATP dependent phosphorylation of adenosine and other related nucleoside analogs to monophosphate derivatives. Can also act on the cytokinin isopentenyladenosine to produce isopentenyladenosine monophosphate. The protein is Adenosine kinase (ADK) of Physcomitrium patens (Spreading-leaved earth moss).